Reading from the N-terminus, the 521-residue chain is Bifunctional purine biosynthesis protein PurH (521 aa).

The region spanning 1-145 (MIKQALISVS…KNHRDVTVVV (145 aa)) is the MGS-like domain.

This sequence belongs to the PurH family.

The catalysed reaction is (6R)-10-formyltetrahydrofolate + 5-amino-1-(5-phospho-beta-D-ribosyl)imidazole-4-carboxamide = 5-formamido-1-(5-phospho-D-ribosyl)imidazole-4-carboxamide + (6S)-5,6,7,8-tetrahydrofolate. It carries out the reaction IMP + H2O = 5-formamido-1-(5-phospho-D-ribosyl)imidazole-4-carboxamide. The protein operates within purine metabolism; IMP biosynthesis via de novo pathway; 5-formamido-1-(5-phospho-D-ribosyl)imidazole-4-carboxamide from 5-amino-1-(5-phospho-D-ribosyl)imidazole-4-carboxamide (10-formyl THF route): step 1/1. It functions in the pathway purine metabolism; IMP biosynthesis via de novo pathway; IMP from 5-formamido-1-(5-phospho-D-ribosyl)imidazole-4-carboxamide: step 1/1. This Burkholderia vietnamiensis (strain G4 / LMG 22486) (Burkholderia cepacia (strain R1808)) protein is Bifunctional purine biosynthesis protein PurH.